Here is a 147-residue protein sequence, read N- to C-terminus: Large ribosomal subunit protein uL11 (147 aa).

This sequence belongs to the universal ribosomal protein uL11 family. Part of the ribosomal stalk of the 50S ribosomal subunit. Interacts with L10 and the large rRNA to form the base of the stalk. L10 forms an elongated spine to which L12 dimers bind in a sequential fashion forming a multimeric L10(L12)X complex. One or more lysine residues are methylated.

Forms part of the ribosomal stalk which helps the ribosome interact with GTP-bound translation factors. This Thermus thermophilus (strain ATCC BAA-163 / DSM 7039 / HB27) protein is Large ribosomal subunit protein uL11.